The following is a 501-amino-acid chain: Aspartate--tRNA ligase, cytoplasmic (501 aa).

Phosphothreonine is present on Thr52. At Lys74 the chain carries N6-acetyllysine. Residue Glu229 participates in L-aspartate binding. Ser249 is modified (phosphoserine). The aspartate stretch occupies residues 251 to 254 (QLYK). L-aspartate is bound at residue Arg273. Residues 273–275 (RAE) and 281–283 (RHL) each bind ATP. An N6-acetyllysine modification is found at Lys374. The segment at 411-415 (KQSNS) is binding site for the 3'-end of tRNA. An ATP-binding site is contributed by Glu424. The L-aspartate site is built by Ser427 and Arg431. An ATP-binding site is contributed by 472-475 (GLER). Thr500 is modified (phosphothreonine; by PKA).

This sequence belongs to the class-II aminoacyl-tRNA synthetase family. Type 2 subfamily. In terms of assembly, homodimer. Part of a multisubunit complex that groups tRNA ligases for Arg (RARS1), Asp (DARS1), Gln (QARS1), Ile (IARS1), Leu (LARS1), Lys (KARS1), Met (MARS1) the bifunctional ligase for Glu and Pro (EPRS1) and the auxiliary subunits AIMP1/p43, AIMP2/p38 and EEF1E1/p18.

The protein resides in the cytoplasm. The catalysed reaction is tRNA(Asp) + L-aspartate + ATP = L-aspartyl-tRNA(Asp) + AMP + diphosphate. Functionally, catalyzes the specific attachment of an amino acid to its cognate tRNA in a 2 step reaction: the amino acid (AA) is first activated by ATP to form AA-AMP and then transferred to the acceptor end of the tRNA. In Pongo abelii (Sumatran orangutan), this protein is Aspartate--tRNA ligase, cytoplasmic (DARS1).